The primary structure comprises 473 residues: 3-isopropylmalate dehydratase large subunit (473 aa).

The [4Fe-4S] cluster site is built by Cys351, Cys414, and Cys417.

This sequence belongs to the aconitase/IPM isomerase family. LeuC type 1 subfamily. As to quaternary structure, heterodimer of LeuC and LeuD. [4Fe-4S] cluster serves as cofactor.

It carries out the reaction (2R,3S)-3-isopropylmalate = (2S)-2-isopropylmalate. Its pathway is amino-acid biosynthesis; L-leucine biosynthesis; L-leucine from 3-methyl-2-oxobutanoate: step 2/4. In terms of biological role, catalyzes the isomerization between 2-isopropylmalate and 3-isopropylmalate, via the formation of 2-isopropylmaleate. The sequence is that of 3-isopropylmalate dehydratase large subunit from Acidovorax ebreus (strain TPSY) (Diaphorobacter sp. (strain TPSY)).